The sequence spans 121 residues: Large ribosomal subunit protein bL19 (121 aa).

The protein belongs to the bacterial ribosomal protein bL19 family.

Functionally, this protein is located at the 30S-50S ribosomal subunit interface and may play a role in the structure and function of the aminoacyl-tRNA binding site. The chain is Large ribosomal subunit protein bL19 from Chloroherpeton thalassium (strain ATCC 35110 / GB-78).